Consider the following 207-residue polypeptide: dTTP/UTP pyrophosphatase (207 aa).

The active-site Proton acceptor is the Asp-86.

It belongs to the Maf family. YhdE subfamily. A divalent metal cation serves as cofactor.

The protein localises to the cytoplasm. It catalyses the reaction dTTP + H2O = dTMP + diphosphate + H(+). It carries out the reaction UTP + H2O = UMP + diphosphate + H(+). In terms of biological role, nucleoside triphosphate pyrophosphatase that hydrolyzes dTTP and UTP. May have a dual role in cell division arrest and in preventing the incorporation of modified nucleotides into cellular nucleic acids. In Nitrosospira multiformis (strain ATCC 25196 / NCIMB 11849 / C 71), this protein is dTTP/UTP pyrophosphatase.